Here is a 277-residue protein sequence, read N- to C-terminus: Acyl-coenzyme A thioesterase MBLAC2 (277 aa).

7 residues coordinate Zn(2+): histidine 80, histidine 82, aspartate 84, histidine 85, histidine 167, aspartate 186, and histidine 228.

This sequence belongs to the metallo-beta-lactamase superfamily. Glyoxalase II family. It depends on Zn(2+) as a cofactor.

The protein localises to the endoplasmic reticulum membrane. It is found in the cell membrane. It catalyses the reaction hexadecanoyl-CoA + H2O = hexadecanoate + CoA + H(+). It carries out the reaction dodecanoyl-CoA + H2O = dodecanoate + CoA + H(+). The enzyme catalyses tetradecanoyl-CoA + H2O = tetradecanoate + CoA + H(+). The catalysed reaction is octadecanoyl-CoA + H2O = octadecanoate + CoA + H(+). It catalyses the reaction a beta-lactam + H2O = a substituted beta-amino acid. Its function is as follows. Acyl-CoA thioesterases are a group of enzymes that catalyze the hydrolysis of acyl-CoAs to the free fatty acid and coenzyme A (CoASH), providing the potential to regulate intracellular levels of acyl-CoAs, free fatty acids and CoASH. Has an acyl-CoA thioesterase activity towards the long chain fatty acyl-CoA thioester palmitoyl-CoA (hexadecanoyl-CoA; C16:0-CoA). Displays a substrate preference for fatty acyl-CoAs with chain-lengths C12-C18. This chain is Acyl-coenzyme A thioesterase MBLAC2 (MBLAC2), found in Gallus gallus (Chicken).